The primary structure comprises 425 residues: Glutamyl-tRNA reductase (425 aa).

Residues 49-52 (TCNR), serine 107, 112-114 (EPQ), and glutamine 118 contribute to the substrate site. Catalysis depends on cysteine 50, which acts as the Nucleophile. Residue 187–192 (GAGETI) coordinates NADP(+).

The protein belongs to the glutamyl-tRNA reductase family. As to quaternary structure, homodimer.

The catalysed reaction is (S)-4-amino-5-oxopentanoate + tRNA(Glu) + NADP(+) = L-glutamyl-tRNA(Glu) + NADPH + H(+). The protein operates within porphyrin-containing compound metabolism; protoporphyrin-IX biosynthesis; 5-aminolevulinate from L-glutamyl-tRNA(Glu): step 1/2. Functionally, catalyzes the NADPH-dependent reduction of glutamyl-tRNA(Glu) to glutamate 1-semialdehyde (GSA). This chain is Glutamyl-tRNA reductase, found in Pseudomonas syringae pv. syringae (strain B728a).